The sequence spans 108 residues: ATP synthase epsilon chain (108 aa).

This sequence belongs to the ATPase epsilon chain family. As to quaternary structure, F-type ATPases have 2 components, CF(1) - the catalytic core - and CF(0) - the membrane proton channel. CF(1) has five subunits: alpha(3), beta(3), gamma(1), delta(1), epsilon(1). CF(0) has three main subunits: a, b and c.

The protein resides in the cell inner membrane. Functionally, produces ATP from ADP in the presence of a proton gradient across the membrane. This chain is ATP synthase epsilon chain, found in Thermotoga maritima (strain ATCC 43589 / DSM 3109 / JCM 10099 / NBRC 100826 / MSB8).